The sequence spans 147 residues: Ubiquitin-conjugating enzyme E2 D2B (147 aa).

The 147-residue stretch at 1 to 147 (MALKRIHKEL…AREWTQKYAM (147 aa)) folds into the UBC core domain. C85 acts as the Glycyl thioester intermediate in catalysis.

The protein belongs to the ubiquitin-conjugating enzyme family. As to quaternary structure, interacts with CNOT4 (via RING domain). Testis-specific. Mainly expressed in the round spermatids (at protein level).

It carries out the reaction S-ubiquitinyl-[E1 ubiquitin-activating enzyme]-L-cysteine + [E2 ubiquitin-conjugating enzyme]-L-cysteine = [E1 ubiquitin-activating enzyme]-L-cysteine + S-ubiquitinyl-[E2 ubiquitin-conjugating enzyme]-L-cysteine.. It participates in protein modification; protein ubiquitination. Catalyzes the covalent attachment of ubiquitin to other proteins. Mediates the selective degradation of short-lived and abnormal proteins. Functions in the E6/E6-AP-induced ubiquitination of p53/TP53. Mediates ubiquitination of PEX5 and SQSTM1 and autoubiquitination of STUB1 and TRAF6. Involved in the signal-induced conjugation and subsequent degradation of NFKBIA, FBXW2-mediated GCM1 ubiquitination and degradation, MDM2-dependent degradation of p53/TP53 and the activation of MAVS in the mitochondria by RIGI in response to viral infection Plays a role in early maturation of the testis. This chain is Ubiquitin-conjugating enzyme E2 D2B (Ube2d2b), found in Rattus norvegicus (Rat).